Consider the following 475-residue polypeptide: Putative poly(A) polymerase catalytic subunit (475 aa).

Belongs to the poxviridae poly(A) polymerase catalytic subunit family. Highly divergent.

The protein resides in the virion. It catalyses the reaction RNA(n) + ATP = RNA(n)-3'-adenine ribonucleotide + diphosphate. Functionally, polymerase that creates the 3'-poly(A) tail of mRNA's. This Ornithodoros (relapsing fever ticks) protein is Putative poly(A) polymerase catalytic subunit.